Consider the following 111-residue polypeptide: Small ribosomal subunit protein uS10 (111 aa).

Belongs to the universal ribosomal protein uS10 family. As to quaternary structure, part of the 30S ribosomal subunit.

Its function is as follows. Involved in the binding of tRNA to the ribosomes. This chain is Small ribosomal subunit protein uS10, found in Xanthomonas euvesicatoria pv. vesicatoria (strain 85-10) (Xanthomonas campestris pv. vesicatoria).